The primary structure comprises 476 residues: Adenosylhomocysteinase (476 aa).

T67, D142, and E202 together coordinate substrate. 203 to 205 is a binding site for NAD(+); the sequence is TTT. Substrate is bound by residues K232 and D236. NAD(+) contacts are provided by residues N237, 266-271, E289, N324, 345-347, and N390; these read GYGDVG and IGH.

It belongs to the adenosylhomocysteinase family. It depends on NAD(+) as a cofactor.

The protein resides in the cytoplasm. It carries out the reaction S-adenosyl-L-homocysteine + H2O = L-homocysteine + adenosine. The protein operates within amino-acid biosynthesis; L-homocysteine biosynthesis; L-homocysteine from S-adenosyl-L-homocysteine: step 1/1. Functionally, may play a key role in the regulation of the intracellular concentration of adenosylhomocysteine. The protein is Adenosylhomocysteinase of Synechococcus sp. (strain WH7803).